The following is a 599-amino-acid chain: Elongation factor 4 (599 aa).

The 183-residue stretch at 2-184 folds into the tr-type G domain; it reads KNIRNFSIIA…RLVRDIPPPE (183 aa). GTP is bound by residues 14–19 and 131–134; these read DHGKST and NKID.

This sequence belongs to the TRAFAC class translation factor GTPase superfamily. Classic translation factor GTPase family. LepA subfamily.

The protein localises to the cell inner membrane. It carries out the reaction GTP + H2O = GDP + phosphate + H(+). Its function is as follows. Required for accurate and efficient protein synthesis under certain stress conditions. May act as a fidelity factor of the translation reaction, by catalyzing a one-codon backward translocation of tRNAs on improperly translocated ribosomes. Back-translocation proceeds from a post-translocation (POST) complex to a pre-translocation (PRE) complex, thus giving elongation factor G a second chance to translocate the tRNAs correctly. Binds to ribosomes in a GTP-dependent manner. This chain is Elongation factor 4, found in Escherichia coli O8 (strain IAI1).